Here is a 542-residue protein sequence, read N- to C-terminus: uncharacterized protein (542 aa).

Positions 256-275 are disordered; the sequence is KKSTTTSSPPITTTHLSKPE. Positions 258–269 are enriched in low complexity; sequence STTTSSPPITTT.

This is an uncharacterized protein from Caenorhabditis elegans.